The chain runs to 200 residues: 3-isopropylmalate dehydratase small subunit (200 aa).

The protein belongs to the LeuD family. LeuD type 1 subfamily. As to quaternary structure, heterodimer of LeuC and LeuD.

It catalyses the reaction (2R,3S)-3-isopropylmalate = (2S)-2-isopropylmalate. It functions in the pathway amino-acid biosynthesis; L-leucine biosynthesis; L-leucine from 3-methyl-2-oxobutanoate: step 2/4. Functionally, catalyzes the isomerization between 2-isopropylmalate and 3-isopropylmalate, via the formation of 2-isopropylmaleate. The chain is 3-isopropylmalate dehydratase small subunit from Methylobacterium radiotolerans (strain ATCC 27329 / DSM 1819 / JCM 2831 / NBRC 15690 / NCIMB 10815 / 0-1).